The chain runs to 242 residues: RNA polymerase sigma factor for flagellar operon (242 aa).

The Polymerase core binding motif lies at aspartate 55 to glycine 68. The H-T-H motif DNA-binding region spans leucine 211 to lysine 230.

It belongs to the sigma-70 factor family.

Its function is as follows. Sigma factors are initiation factors that promote the attachment of RNA polymerase to specific initiation sites and are then released. This alternative sigma factor is specific for the flagellin gene (fliC) expression. The sequence is that of RNA polymerase sigma factor for flagellar operon (lafS) from Vibrio parahaemolyticus serotype O3:K6 (strain RIMD 2210633).